A 367-amino-acid chain; its full sequence is Protein RIC-3 (367 aa).

The first 31 residues, 1 to 31 (MAYSTVQRVALASGLVLAVSLLLPKAFLSRG), serve as a signal peptide directing secretion. Positions 30-67 (RGKRPEPPPGPEGKLDRFPPMMHHHSAPSDGQTPGARF) are disordered. Over 32–95 (KRPEPPPGPE…AGGGGSGRGL (64 aa)) the chain is Lumenal. Residues 96 to 116 (MGQIIPIYGFGIFLYILYILF) form a helical membrane-spanning segment. The Cytoplasmic portion of the chain corresponds to 117–367 (KLSKGKTAED…LRKRNPQGFE (251 aa)). A coiled-coil region spans residues 138 to 169 (HRKITNFELVQLQEKLKETEEAMEKLINRVGP). At lysine 201 the chain carries N6-acetyllysine; alternate. A Glycyl lysine isopeptide (Lys-Gly) (interchain with G-Cter in ubiquitin); alternate cross-link involves residue lysine 201. Disordered regions lie at residues 262 to 301 (QMGE…PESC) and 322 to 367 (ADGY…QGFE). Positions 271–280 (SERLSWDHLP) are enriched in basic and acidic residues. Basic residues predominate over residues 358 to 367 (LRKRNPQGFE).

This sequence belongs to the ric-3 family. Monomer and homodimer. Interacts with CHRNA7, CHRNA3, CHRNA4, CHRNB2, CHRNB4 and HTR3A. In terms of tissue distribution, expressed in brain, with highest levels in hippocampus, cerebellum and superior colliculus.

The protein resides in the endoplasmic reticulum membrane. Its function is as follows. Molecular chaperone which promotes the proper subunit assembly and surface trafficking of alpha-7 (CHRNA7) nicotinic acetylcholine receptor. Promotes the proper subunit assembly and cell surface expression of alpha-8 (CHRNA8) nicotinic acetylcholine receptor. May also promote functional expression of homomeric serotoninergic 5-HT3 receptors, and of heteromeric acetylcholine receptors alpha-3/beta-2, alpha-3/beta-4, alpha-4/beta-2 and alpha-4/beta-4. This is Protein RIC-3 (Ric3) from Mus musculus (Mouse).